The following is a 287-amino-acid chain: Lipoyl synthase (287 aa).

The [4Fe-4S] cluster site is built by C34, C39, C45, C60, C64, C67, and S273. The region spanning 46-262 (WNKRHATVMI…KYIAYSKGFL (217 aa)) is the Radical SAM core domain.

Belongs to the radical SAM superfamily. Lipoyl synthase family. The cofactor is [4Fe-4S] cluster.

It is found in the cytoplasm. The catalysed reaction is [[Fe-S] cluster scaffold protein carrying a second [4Fe-4S](2+) cluster] + N(6)-octanoyl-L-lysyl-[protein] + 2 oxidized [2Fe-2S]-[ferredoxin] + 2 S-adenosyl-L-methionine + 4 H(+) = [[Fe-S] cluster scaffold protein] + N(6)-[(R)-dihydrolipoyl]-L-lysyl-[protein] + 4 Fe(3+) + 2 hydrogen sulfide + 2 5'-deoxyadenosine + 2 L-methionine + 2 reduced [2Fe-2S]-[ferredoxin]. It participates in protein modification; protein lipoylation via endogenous pathway; protein N(6)-(lipoyl)lysine from octanoyl-[acyl-carrier-protein]: step 2/2. In terms of biological role, catalyzes the radical-mediated insertion of two sulfur atoms into the C-6 and C-8 positions of the octanoyl moiety bound to the lipoyl domains of lipoate-dependent enzymes, thereby converting the octanoylated domains into lipoylated derivatives. The chain is Lipoyl synthase from Wolbachia pipientis wMel.